The following is a 419-amino-acid chain: Inward rectifier potassium channel 16 (419 aa).

Residues 1–67 are Cytoplasmic-facing; that stretch reads MSYYGSSYRI…MVDIFTTLVD (67 aa). Residues 68–94 form a helical membrane-spanning segment; it reads TKWRHMFVIFSLSYILSWLIFGSIFWL. Topologically, residues 95-117 are extracellular; sequence IAFHHGDLLSDPDITPCVDNVHS. The segment at residues 118 to 134 is an intramembrane region (helical; Pore-forming); sequence FTAAFLFSLETQTTIGY. Positions 131–136 match the Selectivity filter motif; it reads TIGYGY. Over 135 to 143 the chain is Extracellular; that stretch reads GYRCVTEEC. A helical transmembrane segment spans residues 144–171; that stretch reads SVAVLTVILQSILSCIINTFIIGAALAK. Residues 172–419 are Cytoplasmic-facing; it reads MATARKRAQT…LNRISMESQM (248 aa). Residues Ser-358, Ser-374, and Ser-376 each carry the phosphoserine modification.

The protein belongs to the inward rectifier-type potassium channel (TC 1.A.2.1) family. KCNJ16 subfamily. It forms heteromeric channels with Kir4.1/KCNJ10; this interaction is required for KCNJ16 localization to the basolateral membrane in kidney cells. As a heteromer with KCNJ10, may interact with MAGI1; this interaction may facilitate KCNJ10/KCNJ16 potassium channel expression at the basolateral membrane in kidney cells. May form heteromers with Kir2.1/KCNJ2. Can form heteromeric channels with Kir4.2/KCNJ15. Abundantly expressed in the proximal and distal segments of the nephron.

It localises to the membrane. The protein localises to the basolateral cell membrane. The enzyme catalyses K(+)(in) = K(+)(out). Channel activity is strongly regulated by variations of cytosolic pH; channels are activated by alkaline and inhibited by acidic pH values. Activated by phosphatidylinositol 4,5 biphosphate (PtdIns(4,5)P2). In terms of biological role, inward rectifier potassium channels are characterized by a greater tendency to allow potassium to flow into the cell rather than out of it. Their voltage dependence is regulated by the concentration of extracellular potassium; as external potassium is raised, the voltage range of the channel opening shifts to more positive voltages. The inward rectification is mainly due to the blockage of outward current by internal magnesium. KCNJ16 may be involved in the regulation of fluid and pH balance. In the kidney, together with KCNJ10, mediates basolateral K(+) recycling in distal tubules; this process is critical for Na(+) reabsorption at the tubules. In Mus musculus (Mouse), this protein is Inward rectifier potassium channel 16 (Kcnj16).